A 235-amino-acid polypeptide reads, in one-letter code: Probable transcriptional regulatory protein JJD26997_0557 (235 aa).

The protein belongs to the TACO1 family.

The protein resides in the cytoplasm. This chain is Probable transcriptional regulatory protein JJD26997_0557, found in Campylobacter jejuni subsp. doylei (strain ATCC BAA-1458 / RM4099 / 269.97).